The chain runs to 387 residues: Cysteine desulfurase IscS (387 aa).

Pyridoxal 5'-phosphate contacts are provided by residues 73–74 (AT), Asn-155, Gln-183, and 203–205 (SAH). Lys-206 bears the N6-(pyridoxal phosphate)lysine mark. Thr-241 is a pyridoxal 5'-phosphate binding site. The active-site Cysteine persulfide intermediate is the Cys-328. Cys-328 serves as a coordination point for [2Fe-2S] cluster.

This sequence belongs to the class-V pyridoxal-phosphate-dependent aminotransferase family. NifS/IscS subfamily. Homodimer. Forms a heterotetramer with IscU, interacts with other sulfur acceptors. Pyridoxal 5'-phosphate is required as a cofactor.

It localises to the cytoplasm. The catalysed reaction is (sulfur carrier)-H + L-cysteine = (sulfur carrier)-SH + L-alanine. It participates in cofactor biosynthesis; iron-sulfur cluster biosynthesis. In terms of biological role, master enzyme that delivers sulfur to a number of partners involved in Fe-S cluster assembly, tRNA modification or cofactor biosynthesis. Catalyzes the removal of elemental sulfur atoms from cysteine to produce alanine. Functions as a sulfur delivery protein for Fe-S cluster synthesis onto IscU, an Fe-S scaffold assembly protein, as well as other S acceptor proteins. In Helicobacter pylori (strain Shi470), this protein is Cysteine desulfurase IscS.